The sequence spans 305 residues: Oxygen-dependent coproporphyrinogen-III oxidase (305 aa).

Serine 99 contributes to the substrate binding site. Histidine 103 and histidine 113 together coordinate a divalent metal cation. The active-site Proton donor is the histidine 113. 115–117 (NVR) provides a ligand contact to substrate. The a divalent metal cation site is built by histidine 152 and histidine 182. Residues 247 to 282 (YVEFNLVLDRGTLFGLQTGGRTESILMSMPPLARWE) are important for dimerization. 265–267 (GGR) lines the substrate pocket.

It belongs to the aerobic coproporphyrinogen-III oxidase family. As to quaternary structure, homodimer. A divalent metal cation is required as a cofactor.

It localises to the cytoplasm. The catalysed reaction is coproporphyrinogen III + O2 + 2 H(+) = protoporphyrinogen IX + 2 CO2 + 2 H2O. Its pathway is porphyrin-containing compound metabolism; protoporphyrin-IX biosynthesis; protoporphyrinogen-IX from coproporphyrinogen-III (O2 route): step 1/1. Functionally, involved in the heme biosynthesis. Catalyzes the aerobic oxidative decarboxylation of propionate groups of rings A and B of coproporphyrinogen-III to yield the vinyl groups in protoporphyrinogen-IX. The protein is Oxygen-dependent coproporphyrinogen-III oxidase of Vibrio cholerae serotype O1 (strain ATCC 39541 / Classical Ogawa 395 / O395).